We begin with the raw amino-acid sequence, 340 residues long: MIGAKTRVAIVGGIGYIGSCFASFIKEQNDKLIVTVIDNNKNNHVIKLLKKIGIEFYFADLLDRHKLTEVIAAIQPDVVFHFAAKTSVSESVHNPLKYFDCNVIGTLNLISAISNLQKPIKLFFASSAAVYGQTTNSYISEEIVITETQATNPYGLSKFLDELILNAVAKNSQLQVVCLRFFNVAGAILPFGNFNGNTTLLIPNLVKAFLKQTPFFLYGNDYATKDGSCIRDYIHVYDICNAHFLLWKWLNDHRQIKFETFNLGSGIGTSNLEVIDIAKKVFYPSRLNLEIRPKRSWDPAILVANVAKAKQTFQFKITRNLKDMISDERNFYENFYNDAY.

Residues 16–17 (YI), 37–42 (IDNNKN), 60–61 (DL), 82–86 (FAAKT), serine 127, tyrosine 154, lysine 158, and phenylalanine 182 each bind NAD(+). Residues serine 127 and tyrosine 154 each contribute to the substrate site. The active-site Proton acceptor is the tyrosine 154. Substrate is bound by residues asparagine 183, 199-200 (TL), 216-218 (FLY), arginine 231, and 295-298 (RSWD).

It belongs to the NAD(P)-dependent epimerase/dehydratase family. Homodimer. The cofactor is NAD(+).

It catalyses the reaction UDP-alpha-D-glucose = UDP-alpha-D-galactose. The protein operates within carbohydrate metabolism; galactose metabolism. In terms of biological role, involved in the metabolism of galactose. Catalyzes the conversion of UDP-galactose (UDP-Gal) to UDP-glucose (UDP-Glc) through a mechanism involving the transient reduction of NAD. The protein is UDP-glucose 4-epimerase (galE) of Mycoplasma genitalium (strain ATCC 33530 / DSM 19775 / NCTC 10195 / G37) (Mycoplasmoides genitalium).